Consider the following 172-residue polypeptide: uncharacterized protein (172 aa).

Basic and acidic residues predominate over residues 1–17; sequence MISLDKDENEIEHHNEE. The tract at residues 1–27 is disordered; sequence MISLDKDENEIEHHNEENSLVEQETAP. The chain crosses the membrane as a helical span at residues 129 to 151; sequence IVTVLIGIIVAIFVLVVIGIAAF.

The protein resides in the membrane. This is an uncharacterized protein from Bacillus subtilis (strain 168).